A 495-amino-acid polypeptide reads, in one-letter code: Glycerol kinase (495 aa).

T11 serves as a coordination point for ADP. ATP contacts are provided by T11, T12, and S13. Residue T11 participates in sn-glycerol 3-phosphate binding. R15 is an ADP binding site. The sn-glycerol 3-phosphate site is built by R81, E82, Y133, and D242. The glycerol site is built by R81, E82, Y133, D242, and Q243. Residues T264 and G307 each coordinate ADP. ATP is bound by residues T264, G307, Q311, and G408. G408 contacts ADP.

This sequence belongs to the FGGY kinase family.

The catalysed reaction is glycerol + ATP = sn-glycerol 3-phosphate + ADP + H(+). It participates in polyol metabolism; glycerol degradation via glycerol kinase pathway; sn-glycerol 3-phosphate from glycerol: step 1/1. With respect to regulation, inhibited by fructose 1,6-bisphosphate (FBP). In terms of biological role, key enzyme in the regulation of glycerol uptake and metabolism. Catalyzes the phosphorylation of glycerol to yield sn-glycerol 3-phosphate. In Geobacter sp. (strain M21), this protein is Glycerol kinase.